Reading from the N-terminus, the 518-residue chain is Glutamate--cysteine ligase (518 aa).

This sequence belongs to the glutamate--cysteine ligase type 1 family. Type 1 subfamily.

The catalysed reaction is L-cysteine + L-glutamate + ATP = gamma-L-glutamyl-L-cysteine + ADP + phosphate + H(+). Its pathway is sulfur metabolism; glutathione biosynthesis; glutathione from L-cysteine and L-glutamate: step 1/2. The chain is Glutamate--cysteine ligase from Shigella boydii serotype 4 (strain Sb227).